The primary structure comprises 249 residues: ATP synthase subunit a, chloroplastic (249 aa).

5 helical membrane-spanning segments follow: residues 40 to 60, 97 to 117, 136 to 156, 201 to 221, and 222 to 242; these read QVLI…IVAV, VPFI…GALL, INTT…AGLS, LVVV…VMFL, and GLFT…AYIG.

This sequence belongs to the ATPase A chain family. F-type ATPases have 2 components, CF(1) - the catalytic core - and CF(0) - the membrane proton channel. CF(1) has five subunits: alpha(3), beta(3), gamma(1), delta(1), epsilon(1). CF(0) has four main subunits: a, b, b' and c.

It localises to the plastid. The protein resides in the chloroplast thylakoid membrane. Functionally, key component of the proton channel; it plays a direct role in the translocation of protons across the membrane. The protein is ATP synthase subunit a, chloroplastic of Manihot esculenta (Cassava).